The sequence spans 446 residues: T-box transcription factor TBX20 (446 aa).

The segment at 50–80 (SCHPNLGDLPPLETHSDFSSGGGTGSGAPLC) is disordered. A DNA-binding region (T-box) is located at residues 108-287 (LWDKFHELGT…SNPFAKGFRD (180 aa)).

It is found in the nucleus. Transcriptional regulator that may play a very early role in the differentiation of the cardiac precursors. This is T-box transcription factor TBX20 (tbx20) from Danio rerio (Zebrafish).